A 130-amino-acid polypeptide reads, in one-letter code: Small ribosomal subunit protein uS8B (130 aa).

The protein belongs to the universal ribosomal protein uS8 family. Component of the small ribosomal subunit (SSU). Mature yeast ribosomes consist of a small (40S) and a large (60S) subunit. The 40S small subunit contains 1 molecule of ribosomal RNA (18S rRNA) and 33 different proteins (encoded by 57 genes). The large 60S subunit contains 3 rRNA molecules (25S, 5.8S and 5S rRNA) and 46 different proteins (encoded by 81 genes).

The protein localises to the cytoplasm. Component of the ribosome, a large ribonucleoprotein complex responsible for the synthesis of proteins in the cell. The small ribosomal subunit (SSU) binds messenger RNAs (mRNAs) and translates the encoded message by selecting cognate aminoacyl-transfer RNA (tRNA) molecules. The large subunit (LSU) contains the ribosomal catalytic site termed the peptidyl transferase center (PTC), which catalyzes the formation of peptide bonds, thereby polymerizing the amino acids delivered by tRNAs into a polypeptide chain. The nascent polypeptides leave the ribosome through a tunnel in the LSU and interact with protein factors that function in enzymatic processing, targeting, and the membrane insertion of nascent chains at the exit of the ribosomal tunnel. This Saccharomyces cerevisiae (strain ATCC 204508 / S288c) (Baker's yeast) protein is Small ribosomal subunit protein uS8B.